The chain runs to 40 residues: Adenylate kinase (40 aa).

Residue 10-15 (GAGKGT) participates in ATP binding. Residues 30-40 (STGDMFIKAIK) form an NMP region. Thr-31 lines the AMP pocket.

It belongs to the adenylate kinase family. In terms of assembly, monomer.

Its subcellular location is the cytoplasm. The catalysed reaction is AMP + ATP = 2 ADP. Its pathway is purine metabolism; AMP biosynthesis via salvage pathway; AMP from ADP: step 1/1. In terms of biological role, catalyzes the reversible transfer of the terminal phosphate group between ATP and AMP. Plays an important role in cellular energy homeostasis and in adenine nucleotide metabolism. In Staphylococcus carnosus, this protein is Adenylate kinase (adk).